The following is a 560-amino-acid chain: Putative transport protein VP1232 (560 aa).

5 consecutive transmembrane segments (helical) span residues 8–28 (LLDQ…LAIG), 37–57 (LGNS…GFSF), 66–86 (FMLF…GIFF), 91–111 (HYFI…YGLS), and 164–184 (VGYA…AKLL). RCK C-terminal domains lie at 205 to 292 (LGNS…FRNG) and 293 to 376 (KEVF…KIGF). 6 helical membrane-spanning segments follow: residues 386–406 (LLAF…TMTF), 409–429 (VSFS…LGFL), 443–463 (ALNM…GLSA), 478–498 (VIGL…LVGA), 506–526 (ALLF…DVVN), and 539–559 (AGTY…LIIL).

It belongs to the AAE transporter (TC 2.A.81) family. YbjL subfamily.

It is found in the cell membrane. The protein is Putative transport protein VP1232 of Vibrio parahaemolyticus serotype O3:K6 (strain RIMD 2210633).